The sequence spans 134 residues: Holo-[acyl-carrier-protein] synthase (134 aa).

Residues aspartate 8 and glutamate 57 each coordinate Mg(2+).

This sequence belongs to the P-Pant transferase superfamily. AcpS family. It depends on Mg(2+) as a cofactor.

The protein resides in the cytoplasm. The enzyme catalyses apo-[ACP] + CoA = holo-[ACP] + adenosine 3',5'-bisphosphate + H(+). Transfers the 4'-phosphopantetheine moiety from coenzyme A to a Ser of acyl-carrier-protein. This Brucella abortus (strain S19) protein is Holo-[acyl-carrier-protein] synthase.